Consider the following 118-residue polypeptide: Large ribosomal subunit protein uL24 (118 aa).

This sequence belongs to the universal ribosomal protein uL24 family. Part of the 50S ribosomal subunit.

Functionally, one of two assembly initiator proteins, it binds directly to the 5'-end of the 23S rRNA, where it nucleates assembly of the 50S subunit. Its function is as follows. One of the proteins that surrounds the polypeptide exit tunnel on the outside of the subunit. This chain is Large ribosomal subunit protein uL24, found in Parasynechococcus marenigrum (strain WH8102).